The primary structure comprises 196 residues: Homeobox protein ANF-1 (196 aa).

The segment at residues 119–178 is a DNA-binding region (homeobox); that stretch reads GRRPRTAFTRNQIEVLENVFKMNSYPGIDIREELARKLDLEEDRIQIWFQNRRAKLKRSH.

Belongs to the ANF homeobox family.

It is found in the nucleus. Its function is as follows. May be involved in the early patterning of the most anterior region of the main embryonic body axis. The sequence is that of Homeobox protein ANF-1 from Gallus gallus (Chicken).